We begin with the raw amino-acid sequence, 507 residues long: ATP synthase subunit alpha, chloroplastic (507 aa).

170–177 serves as a coordination point for ATP; that stretch reads GDRQTGKT.

This sequence belongs to the ATPase alpha/beta chains family. As to quaternary structure, F-type ATPases have 2 components, CF(1) - the catalytic core - and CF(0) - the membrane proton channel. CF(1) has five subunits: alpha(3), beta(3), gamma(1), delta(1), epsilon(1). CF(0) has four main subunits: a, b, b' and c.

It is found in the plastid. It localises to the chloroplast thylakoid membrane. The catalysed reaction is ATP + H2O + 4 H(+)(in) = ADP + phosphate + 5 H(+)(out). Its function is as follows. Produces ATP from ADP in the presence of a proton gradient across the membrane. The alpha chain is a regulatory subunit. The protein is ATP synthase subunit alpha, chloroplastic of Illicium oligandrum (Star anise).